A 425-amino-acid chain; its full sequence is Serine--tRNA ligase (425 aa).

An L-serine-binding site is contributed by 233–235 (TAE). 264–266 (RAE) is a binding site for ATP. Glutamate 287 serves as a coordination point for L-serine. 351 to 354 (EISS) provides a ligand contact to ATP. Serine 387 provides a ligand contact to L-serine.

It belongs to the class-II aminoacyl-tRNA synthetase family. Type-1 seryl-tRNA synthetase subfamily. As to quaternary structure, homodimer. The tRNA molecule binds across the dimer.

The protein resides in the cytoplasm. It catalyses the reaction tRNA(Ser) + L-serine + ATP = L-seryl-tRNA(Ser) + AMP + diphosphate + H(+). The catalysed reaction is tRNA(Sec) + L-serine + ATP = L-seryl-tRNA(Sec) + AMP + diphosphate + H(+). It functions in the pathway aminoacyl-tRNA biosynthesis; selenocysteinyl-tRNA(Sec) biosynthesis; L-seryl-tRNA(Sec) from L-serine and tRNA(Sec): step 1/1. Its function is as follows. Catalyzes the attachment of serine to tRNA(Ser). Is also able to aminoacylate tRNA(Sec) with serine, to form the misacylated tRNA L-seryl-tRNA(Sec), which will be further converted into selenocysteinyl-tRNA(Sec). The chain is Serine--tRNA ligase from Clostridium perfringens (strain ATCC 13124 / DSM 756 / JCM 1290 / NCIMB 6125 / NCTC 8237 / Type A).